Consider the following 238-residue polypeptide: DNA repair protein RecO (238 aa).

This sequence belongs to the RecO family.

Its function is as follows. Involved in DNA repair and RecF pathway recombination. This is DNA repair protein RecO from Aliivibrio salmonicida (strain LFI1238) (Vibrio salmonicida (strain LFI1238)).